The sequence spans 617 residues: Probable potassium transport system protein Kup 3 (617 aa).

The next 11 membrane-spanning stretches (helical) occupy residues 42 to 62 (VASL…ALLI), 95 to 115 (LVVG…TPAI), 129 to 149 (PSLA…LFMM), 160 to 180 (IFGP…IHGI), 206 to 226 (VSFA…AMYA), 240 to 260 (WFAI…ALLI), 282 to 302 (LVAF…SGVF), 330 to 350 (IYVP…VLSF), 360 to 380 (YGIA…LVAI), 386 to 406 (PWLV…FFSA), and 411 to 431 (LFEG…MMLT).

Belongs to the HAK/KUP transporter (TC 2.A.72) family.

Its subcellular location is the cell inner membrane. The enzyme catalyses K(+)(in) + H(+)(in) = K(+)(out) + H(+)(out). Its function is as follows. Transport of potassium into the cell. Likely operates as a K(+):H(+) symporter. This Bradyrhizobium diazoefficiens (strain JCM 10833 / BCRC 13528 / IAM 13628 / NBRC 14792 / USDA 110) protein is Probable potassium transport system protein Kup 3.